We begin with the raw amino-acid sequence, 137 residues long: Protein LTO1 homolog (137 aa).

Ala-2 carries the N-acetylalanine modification. A deca-GX3 motif; required for interaction with YAE1 and the CIA complex region spans residues 22–58; that stretch reads GYQEGYEEGSSLGIVEGKRYGMVHGAKIGSEIGCYRG.

This sequence belongs to the LTO1 family. As to quaternary structure, forms a complex with YAE1. Interacts with PYCR1 and PYCR2.

Its subcellular location is the nucleus. In terms of biological role, the complex LTO1:YAE1 functions as a target specific adapter that probably recruits apo-ABCE1 to the cytosolic iron-sulfur protein assembly (CIA) complex machinery. May be required for biogenesis of the large ribosomal subunit and initiation of translation. May play a role in the regulation of proline metabolism and ROS production. The polypeptide is Protein LTO1 homolog (Mus musculus (Mouse)).